Consider the following 243-residue polypeptide: Protein HUA2 (243 aa).

It is found in the cytoplasm. Functionally, may have a role in actin patch assembly. This chain is Protein HUA2 (HUA2), found in Saccharomyces cerevisiae (strain ATCC 204508 / S288c) (Baker's yeast).